The following is a 1265-amino-acid chain: Methionine synthase (1265 aa).

Residues 19-338 (QDEIEAILQE…DHIREIAEAV (320 aa)) form the Hcy-binding domain. Residues Cys260, Cys323, and Cys324 each contribute to the Zn(2+) site. A Pterin-binding domain is found at 371–632 (FVNIGERCNV…IHKELLQLCE (262 aa)). (6S)-5,6,7,8-tetrahydrofolate is bound by residues 382-384 (GSR), Asp449, Asn470, Asp537, Asn579, Arg585, and Arg591. In terms of domain architecture, B12-binding N-terminal spans 662-759 (QTDEWRNGPL…FMEKEREETK (98 aa)). Methylcob(III)alamin is bound by residues Glu709, 782–786 (GDVHD), His785, Ser830, Thr834, and Ala886. In terms of domain architecture, B12-binding spans 772–907 (QGTIVLATVK…DENLKDEYFE (136 aa)). The region spanning 923–1265 (SLKERRYLTL…LGPILGYDTD (343 aa)) is the AdoMet activation domain. Residues Asp974, Arg1172, and 1227–1228 (YF) contribute to the S-adenosyl-L-methionine site. Position 1264 is a phosphothreonine (Thr1264).

Belongs to the vitamin-B12 dependent methionine synthase family. In terms of assembly, monomer. Dimer. Forms a multiprotein complex with MMACHC, MMADHC and MTRR. Methylcob(III)alamin serves as cofactor. It depends on Zn(2+) as a cofactor.

The protein resides in the cytoplasm. The enzyme catalyses (6S)-5-methyl-5,6,7,8-tetrahydrofolate + L-homocysteine = (6S)-5,6,7,8-tetrahydrofolate + L-methionine. It participates in amino-acid biosynthesis; L-methionine biosynthesis via de novo pathway; L-methionine from L-homocysteine (MetH route): step 1/1. Its function is as follows. Catalyzes the transfer of a methyl group from methylcob(III)alamin (MeCbl) to homocysteine, yielding enzyme-bound cob(I)alamin and methionine in the cytosol. MeCbl is an active form of cobalamin (vitamin B12) used as a cofactor for methionine biosynthesis. Cob(I)alamin form is regenerated to MeCbl by a transfer of a methyl group from 5-methyltetrahydrofolate. The processing of cobalamin in the cytosol occurs in a multiprotein complex composed of at least MMACHC, MMADHC, MTRR (methionine synthase reductase) and MTR which may contribute to shuttle safely and efficiently cobalamin towards MTR in order to produce methionine. The polypeptide is Methionine synthase (MTR) (Bos taurus (Bovine)).